A 417-amino-acid polypeptide reads, in one-letter code: MIPGLINARVTFHNSPVHALERFTFRDVGAALEGFRAGSGLDECVIVQTCNRVELFGASASPDMGSIRRTWASLAGIDESLFGGHLESSGGGEVLEHLLRLTSGLDSMVVGEEQILGQVKNAITSARTSGASGRRLNTLFDRAIRSGTRIRNSTGIGSGGVSVGSMAVRLVEENMDDLHSRSILLIGTGEVSTLVAKSLGKRGYDFSVASRTLQRSQAFCSAMGGSPVLFEDVLDGFGGYDVLFVATGAPYFLVTYDKISEVLESRGGMMILDLSNPRTVDEKVATLGGIKLMNLDQIAEMVSKNMRNRMSSVGKVEQMISGEVPVMEAAMNRLDAEPIAEAAFKEADALRRRELAKALQMLGNIGGNDAKVIDDLTRALVESIMSAPMNNLRRASEEGDADVVDAAARLFDYRRPG.

Residues 49–52, Ser107, 112–114, and Gln118 each bind substrate; these read TCNR and EEQ. Cys50 (nucleophile) is an active-site residue. 187–192 contributes to the NADP(+) binding site; that stretch reads GTGEVS.

The protein belongs to the glutamyl-tRNA reductase family. Homodimer.

It catalyses the reaction (S)-4-amino-5-oxopentanoate + tRNA(Glu) + NADP(+) = L-glutamyl-tRNA(Glu) + NADPH + H(+). It participates in porphyrin-containing compound metabolism; protoporphyrin-IX biosynthesis; 5-aminolevulinate from L-glutamyl-tRNA(Glu): step 1/2. In terms of biological role, catalyzes the NADPH-dependent reduction of glutamyl-tRNA(Glu) to glutamate 1-semialdehyde (GSA). This Cenarchaeum symbiosum (strain A) protein is Glutamyl-tRNA reductase.